Here is a 542-residue protein sequence, read N- to C-terminus: Aminotriazole resistance protein (542 aa).

Topologically, residues 1–108 (MGNQSLVVLT…SFGSEGNSKS (108 aa)) are cytoplasmic. Residues 109-129 (WLMASFPLVSGSFILISGRLG) form a helical membrane-spanning segment. Residues 130–136 (DIYGLKK) lie on the Extracellular side of the membrane. The chain crosses the membrane as a helical span at residues 137-157 (MLLVGYVLVIIWSLICGITKY). Over 158–172 (SGSDTFFIISRAFQG) the chain is Cytoplasmic. Residues 173–193 (LGIAFVLPNVLGIIGNIYVGG) form a helical membrane-spanning segment. The Extracellular portion of the chain corresponds to 194 to 198 (TFRKN). Residues 199-219 (IVISFVGAMAPIGATLGCLFA) traverse the membrane as a helical segment. Topologically, residues 220–231 (GLIGTEDPKQWP) are cytoplasmic. Residues 232 to 252 (WAFYAYSIAAFINFVLSIYAI) form a helical membrane-spanning segment. At 253 to 262 (PSTIPTNIHH) the chain is on the extracellular side. A helical membrane pass occupies residues 263-283 (FSMDWIGSVLGVIGLILLNFV). Residues 284–295 (WNQAPISGWNQA) are Cytoplasmic-facing. Residues 296–316 (YIIVILIISVIFLVVFIIYEI) form a helical membrane-spanning segment. The Extracellular portion of the chain corresponds to 317 to 333 (RFAKTPLLPRAVIKDRH). Residues 334 to 354 (MIQIMLALFFGWGSFGIFTFY) form a helical membrane-spanning segment. Residues 355–371 (YFQFQLNIRQYTALWAG) lie on the Cytoplasmic side of the membrane. The helical transmembrane segment at 372-392 (GTYFMFLIWGIIAALLVGFTI) threads the bilayer. Residues 393-399 (KNVSPSV) lie on the Extracellular side of the membrane. A helical membrane pass occupies residues 400–420 (FLFFSMVAFNVGSIMASVTPV). Residues 421-429 (HETYFRTQL) are Cytoplasmic-facing. The chain crosses the membrane as a helical span at residues 430–450 (GTMIILSFGMDLSFPASSIIF). Residues 451 to 505 (SDNLPMEYQGMAGSLVNTVVNYSMSLCLGMGATVETQVNSDGKHLLKGYRGAQYL) are Extracellular-facing. An N-linked (GlcNAc...) asparagine glycan is attached at Asn471. Residues 506–526 (GIGLASLACMISGLYMVESFI) form a helical membrane-spanning segment. Over 527-542 (KGRRARAAAEYDCTVA) the chain is Cytoplasmic.

It belongs to the major facilitator superfamily.

Its subcellular location is the membrane. In terms of biological role, putative component of the machinery responsible for pumping aminotriazole (and possibly other toxic compounds) out of the cell. Probable ATP-dependent export permease. Appears to confer resistance only to aminotriazole. The sequence is that of Aminotriazole resistance protein (ATR1) from Saccharomyces cerevisiae (strain ATCC 204508 / S288c) (Baker's yeast).